Consider the following 78-residue polypeptide: Beta-defensin 135 (78 aa).

Positions 1-24 (MATRSVLLALVVLNLLFYVPPGRS) are cleaved as a signal peptide. 2 disulfides stabilise this stretch: C37–C64 and C48–C66.

Belongs to the beta-defensin family.

The protein localises to the secreted. Its function is as follows. Has antibacterial activity. This is Beta-defensin 135 (DEFB135) from Pan troglodytes (Chimpanzee).